The following is a 35-amino-acid chain: Photosystem II reaction center protein M (35 aa).

A helical membrane pass occupies residues 7 to 27; it reads GFLASLLFVLVPSVFLIVLYI.

This sequence belongs to the PsbM family. PSII is composed of 1 copy each of membrane proteins PsbA, PsbB, PsbC, PsbD, PsbE, PsbF, PsbH, PsbI, PsbJ, PsbK, PsbL, PsbM, PsbT, PsbX, PsbY, PsbZ, Psb30/Ycf12, peripheral proteins PsbO, CyanoQ (PsbQ), PsbU, PsbV and a large number of cofactors. It forms dimeric complexes.

The protein resides in the cellular thylakoid membrane. In terms of biological role, one of the components of the core complex of photosystem II (PSII). PSII is a light-driven water:plastoquinone oxidoreductase that uses light energy to abstract electrons from H(2)O, generating O(2) and a proton gradient subsequently used for ATP formation. It consists of a core antenna complex that captures photons, and an electron transfer chain that converts photonic excitation into a charge separation. This subunit is found at the monomer-monomer interface. The polypeptide is Photosystem II reaction center protein M (Synechococcus elongatus (strain ATCC 33912 / PCC 7942 / FACHB-805) (Anacystis nidulans R2)).